Consider the following 580-residue polypeptide: Phosphatase and actin regulator 1 (580 aa).

2 positions are modified to phosphoserine: Ser-67 and Ser-78. Thr-104 carries the post-translational modification Phosphothreonine. The Nuclear localization signal signature appears at 108-129 (RRRSKFANLGRIFKPWKWRKKK). The stretch at 138–163 (AALERKISMRQSREELIKRGVLKEIY) is one RPEL 1 repeat. 2 disordered regions span residues 331–355 (EQRV…TKAG) and 376–410 (KENV…SSLY). Over residues 335 to 345 (PCSTSYHSSGL) the composition is skewed to polar residues. The segment covering 395–407 (EEEEEEEDEDDDS) has biased composition (acidic residues). RPEL repeat units follow at residues 422-447 (DSLA…PRQT), 460-484 (TKLT…LKPR), and 498-523 (RRLT…IRFS). Positions 462–494 (LTRRLSQRPTAEELEQRNILKPRNEQEEQEEKR) are disordered. Ser-467 bears the Phosphoserine mark. Positions 471 to 494 (TAEELEQRNILKPRNEQEEQEEKR) are enriched in basic and acidic residues. Ser-505 is modified (phosphoserine).

It belongs to the phosphatase and actin regulator family. In terms of assembly, interacts (via RPEL repeats) with ACTA1 and PPP1CA; ACTA1 and PPP1CA compete for the same binding site. Detected in umbilical vein endothelial cells.

Its subcellular location is the cytoplasm. The protein localises to the synapse. It is found in the nucleus. In terms of biological role, binds actin monomers (G actin) and plays a role in multiple processes including the regulation of actin cytoskeleton dynamics, actin stress fibers formation, cell motility and survival, formation of tubules by endothelial cells, and regulation of PPP1CA activity. Involved in the regulation of cortical neuron migration and dendrite arborization. In Homo sapiens (Human), this protein is Phosphatase and actin regulator 1 (PHACTR1).